The sequence spans 274 residues: tRNA pseudouridine synthase A (274 aa).

Catalysis depends on D57, which acts as the Nucleophile. Y115 lines the substrate pocket.

The protein belongs to the tRNA pseudouridine synthase TruA family. In terms of assembly, homodimer.

It catalyses the reaction uridine(38/39/40) in tRNA = pseudouridine(38/39/40) in tRNA. Formation of pseudouridine at positions 38, 39 and 40 in the anticodon stem and loop of transfer RNAs. The chain is tRNA pseudouridine synthase A from Frankia casuarinae (strain DSM 45818 / CECT 9043 / HFP020203 / CcI3).